Consider the following 468-residue polypeptide: Argininosuccinate lyase (468 aa).

This sequence belongs to the lyase 1 family. Argininosuccinate lyase subfamily.

It is found in the cytoplasm. The catalysed reaction is 2-(N(omega)-L-arginino)succinate = fumarate + L-arginine. It functions in the pathway amino-acid biosynthesis; L-arginine biosynthesis; L-arginine from L-ornithine and carbamoyl phosphate: step 3/3. This Paraburkholderia xenovorans (strain LB400) protein is Argininosuccinate lyase.